We begin with the raw amino-acid sequence, 194 residues long: MSSILIAVIAISALALVFGLILGFASIKFKVESDPIVDQIDSILPQTQCGQCGYPGCKPYAEAIANGDTINKCPPGGQATIEKLADLMGVDIPSSAHDEEKSIKKIAFIHEDMCIGCTKCIQACPVDAIVGGTKALHTVIEAECTGCDLCVAPCPTDCIEMIPVNTTPDNWKWDLNTIPVVNLPADKPTKASEL.

Residues methionine 1–serine 26 form a hydrophobic region. The 59-residue stretch at glutamate 32 to valine 90 folds into the 4Fe-4S domain. 12 residues coordinate [4Fe-4S] cluster: cysteine 49, cysteine 52, cysteine 57, cysteine 73, cysteine 114, cysteine 117, cysteine 120, cysteine 124, cysteine 144, cysteine 147, cysteine 150, and cysteine 154. 4Fe-4S ferredoxin-type domains are found at residues lysine 105–lysine 134 and alanine 135–valine 164.

It belongs to the 4Fe4S bacterial-type ferredoxin family. RnfB subfamily. In terms of assembly, the complex is composed of six subunits: RnfA, RnfB, RnfC, RnfD, RnfE and RnfG. The cofactor is [4Fe-4S] cluster.

It is found in the cell inner membrane. In terms of biological role, part of a membrane-bound complex that couples electron transfer with translocation of ions across the membrane. The sequence is that of Ion-translocating oxidoreductase complex subunit B from Aliivibrio salmonicida (strain LFI1238) (Vibrio salmonicida (strain LFI1238)).